We begin with the raw amino-acid sequence, 162 residues long: Ribosomal RNA large subunit methyltransferase H (162 aa).

Gly108 contacts S-adenosyl-L-methionine.

Belongs to the RNA methyltransferase RlmH family. Homodimer.

The protein resides in the cytoplasm. It catalyses the reaction pseudouridine(1915) in 23S rRNA + S-adenosyl-L-methionine = N(3)-methylpseudouridine(1915) in 23S rRNA + S-adenosyl-L-homocysteine + H(+). In terms of biological role, specifically methylates the pseudouridine at position 1915 (m3Psi1915) in 23S rRNA. The polypeptide is Ribosomal RNA large subunit methyltransferase H (Methylobacterium nodulans (strain LMG 21967 / CNCM I-2342 / ORS 2060)).